The chain runs to 370 residues: Flagellar P-ring protein (370 aa).

The N-terminal stretch at M1 to K21 is a signal peptide.

The protein belongs to the FlgI family. As to quaternary structure, the basal body constitutes a major portion of the flagellar organelle and consists of four rings (L,P,S, and M) mounted on a central rod.

Its subcellular location is the bacterial flagellum basal body. Assembles around the rod to form the L-ring and probably protects the motor/basal body from shearing forces during rotation. The protein is Flagellar P-ring protein of Wigglesworthia glossinidia brevipalpis.